Reading from the N-terminus, the 106-residue chain is Urease subunit beta (106 aa).

The protein belongs to the urease beta subunit family. As to quaternary structure, heterotrimer of UreA (gamma), UreB (beta) and UreC (alpha) subunits. Three heterotrimers associate to form the active enzyme.

The protein resides in the cytoplasm. The catalysed reaction is urea + 2 H2O + H(+) = hydrogencarbonate + 2 NH4(+). It functions in the pathway nitrogen metabolism; urea degradation; CO(2) and NH(3) from urea (urease route): step 1/1. The sequence is that of Urease subunit beta from Alkalilimnicola ehrlichii (strain ATCC BAA-1101 / DSM 17681 / MLHE-1).